We begin with the raw amino-acid sequence, 166 residues long: Telethonin (166 aa).

Position 39 is a phosphoserine (S39). A disordered region spans residues 145 to 166 (VSKPGTLRRSLSRSMSQEAQRG). Positions 156–166 (SRSMSQEAQRG) are enriched in polar residues.

As to quaternary structure, interacts with MYOZ1, MYOZ2 and MYOZ3. Interacts with CSRP3. Interacts directly with the N-terminal Ig-like domains of 2 titin (TTN) molecules. Interacts with ANKRD2; the interaction is direct.

It is found in the cytoplasm. Its subcellular location is the myofibril. The protein localises to the sarcomere. Functionally, muscle assembly regulating factor. Mediates the antiparallel assembly of titin (TTN) molecules at the sarcomeric Z-disk. The polypeptide is Telethonin (TCAP) (Bos taurus (Bovine)).